A 145-amino-acid polypeptide reads, in one-letter code: Plastocyanin, chloroplastic (145 aa).

The N-terminal 47 residues, 1-47 (MKATLRAPASRASAVRPVASLKAAAQRVASVAGVSVASLALTLAAHA), are a transit peptide targeting the chloroplast. In terms of domain architecture, Plastocyanin-like spans 48–145 (DATVKLGADS…AGMVGKIIVQ (98 aa)). Cu cation contacts are provided by H85, C130, H133, and M138.

The protein belongs to the plastocyanin family. Requires Cu(2+) as cofactor.

The protein resides in the plastid. Its subcellular location is the chloroplast thylakoid membrane. Participates in electron transfer between P700 and the cytochrome b6-f complex in photosystem I. The chain is Plastocyanin, chloroplastic (PETE) from Chlamydomonas reinhardtii (Chlamydomonas smithii).